A 242-amino-acid polypeptide reads, in one-letter code: 7-cyano-7-deazaguanine synthase (242 aa).

ATP is bound at residue 13-23 (FSGGQDSSVCL). Cys201, Cys216, Cys219, and Cys222 together coordinate Zn(2+).

It belongs to the QueC family. Zn(2+) serves as cofactor.

It catalyses the reaction 7-carboxy-7-deazaguanine + NH4(+) + ATP = 7-cyano-7-deazaguanine + ADP + phosphate + H2O + H(+). It participates in purine metabolism; 7-cyano-7-deazaguanine biosynthesis. Catalyzes the ATP-dependent conversion of 7-carboxy-7-deazaguanine (CDG) to 7-cyano-7-deazaguanine (preQ(0)). The sequence is that of 7-cyano-7-deazaguanine synthase from Caulobacter vibrioides (strain ATCC 19089 / CIP 103742 / CB 15) (Caulobacter crescentus).